Consider the following 304-residue polypeptide: MVALGRRSWLVPLAMVLAVSSCLAGPAMAAGKTGQMTVFWGRNKNEGTLKETCDTGLYTTVVISFYSVFGHGRYWGDLSGHDLRVIGADIKHCQSKNIFVFLSIGGAGKDYSLPTSKSAADVADNIWNAHMDGRRPGVFRPFGDAAVDGIDFFIDQGAPDHYDDLARNLYAYNKMYRARTPVRLTATVRCAFPDPRMKKALDTKLFERIHVRFYDDATCSYNHAGLAGVMAQWNKWTARYPGSHVYLGLAAANVPGKNDNVFIKQLYYDLLPNVQKAKNYGGIMLWDRFYDKQTGYGKTVKYWA.

An N-terminal signal peptide occupies residues 1–29 (MVALGRRSWLVPLAMVLAVSSCLAGPAMA). Positions 34-304 (GQMTVFWGRN…GYGKTVKYWA (271 aa)) constitute a GH18 domain. 2 disulfide bridges follow: Cys-53-Cys-93 and Cys-190-Cys-219.

It belongs to the glycosyl hydrolase 18 family. Xylanase inhibitor subfamily. Binds to fungal GH11 xylanases. In terms of tissue distribution, constitutively expressed in shoots.

The protein resides in the secreted. Functionally, fungal xylanase inhibitor. Possesses competitive inhibiting activity against fungal endo-1,4-beta-D-xylanases belonging to glycoside hydrolase family 11 (GH11). May function in plant defense against secreted fungal pathogen xylanases. Is similar to class III chitinases, but does not exhibit chitinase activity. In Oryza sativa subsp. japonica (Rice), this protein is Xylanase inhibitor protein 1.